Reading from the N-terminus, the 208-residue chain is MSNPQAERLVHFLAVNGIRDSEVLSAIARVPRECFLSQAMMHQAYDNNALPIGQGQTISQPYIVAKMTELLRLKRDSKVLEIGTGSGYQTAVLALLVEHVYSVERIKSLQWDAKRRLKQLDIYNVSTKHGDGWLGWENKGPFDAIIVTAAAESVPPVLLQQLNDGGRMVLPVGTDEQQLILIERQKDQFVSQVIEAVNFVPLIAGDLA.

Ser59 is a catalytic residue.

It belongs to the methyltransferase superfamily. L-isoaspartyl/D-aspartyl protein methyltransferase family.

It is found in the cytoplasm. It carries out the reaction [protein]-L-isoaspartate + S-adenosyl-L-methionine = [protein]-L-isoaspartate alpha-methyl ester + S-adenosyl-L-homocysteine. Functionally, catalyzes the methyl esterification of L-isoaspartyl residues in peptides and proteins that result from spontaneous decomposition of normal L-aspartyl and L-asparaginyl residues. It plays a role in the repair and/or degradation of damaged proteins. The protein is Protein-L-isoaspartate O-methyltransferase of Vibrio vulnificus (strain CMCP6).